A 492-amino-acid polypeptide reads, in one-letter code: GTPase Der (492 aa).

2 EngA-type G domains span residues 3-166 (PVVA…VDEV) and 205-378 (IKLA…DSAT). Residues 9–16 (GRPNVGKS), 56–60 (DTGGI), 118–121 (NKTD), 211–218 (GRPNVGKS), 258–262 (DTAGV), and 323–326 (NKWD) contribute to the GTP site. The KH-like domain maps to 379–463 (RRVSTAMLTR…PIRIQFKEGE (85 aa)).

It belongs to the TRAFAC class TrmE-Era-EngA-EngB-Septin-like GTPase superfamily. EngA (Der) GTPase family. In terms of assembly, associates with the 50S ribosomal subunit.

Its function is as follows. GTPase that plays an essential role in the late steps of ribosome biogenesis. This Klebsiella pneumoniae subsp. pneumoniae (strain ATCC 700721 / MGH 78578) protein is GTPase Der.